A 209-amino-acid polypeptide reads, in one-letter code: Protein GrpE (209 aa).

Belongs to the GrpE family. Homodimer.

It is found in the cytoplasm. Functionally, participates actively in the response to hyperosmotic and heat shock by preventing the aggregation of stress-denatured proteins, in association with DnaK and GrpE. It is the nucleotide exchange factor for DnaK and may function as a thermosensor. Unfolded proteins bind initially to DnaJ; upon interaction with the DnaJ-bound protein, DnaK hydrolyzes its bound ATP, resulting in the formation of a stable complex. GrpE releases ADP from DnaK; ATP binding to DnaK triggers the release of the substrate protein, thus completing the reaction cycle. Several rounds of ATP-dependent interactions between DnaJ, DnaK and GrpE are required for fully efficient folding. This chain is Protein GrpE, found in Colwellia psychrerythraea (strain 34H / ATCC BAA-681) (Vibrio psychroerythus).